A 169-amino-acid polypeptide reads, in one-letter code: Regulator of sigma D (169 aa).

The protein belongs to the Rsd/AlgQ family. Interacts with RpoD.

The protein resides in the cytoplasm. In terms of biological role, binds RpoD and negatively regulates RpoD-mediated transcription activation by preventing the interaction between the primary sigma factor RpoD with the catalytic core of the RNA polymerase and with promoter DNA. May be involved in replacement of the RNA polymerase sigma subunit from RpoD to RpoS during the transition from exponential growth to the stationary phase. This chain is Regulator of sigma D, found in Yersinia pestis.